The following is a 202-amino-acid chain: Tetranectin (202 aa).

Positions 1–21 (MELWGPCVLLCLFSLLTQVTA) are cleaved as a signal peptide. Disulfide bonds link Cys-71/Cys-81, Cys-98/Cys-197, and Cys-173/Cys-189. The C-type lectin domain occupies 77–198 (VHMKCFLAFV…CRDKLPYVCQ (122 aa)).

As to quaternary structure, homotrimer.

It localises to the secreted. Functionally, tetranectin binds to plasminogen and to isolated kringle 4. May be involved in the packaging of molecules destined for exocytosis. Plays a role in retinal function. This chain is Tetranectin (CLEC3B), found in Bos taurus (Bovine).